A 317-amino-acid chain; its full sequence is UV DNA damage endonuclease (317 aa).

It belongs to the uve1/UvsE family.

In terms of biological role, component in a DNA repair pathway. Removal of UV LIGHT damaged nucleotides. Recognizes pyrimidine dimers and cleave a phosphodiester bond immediately 5' to the lesion. This Bacillus thuringiensis subsp. konkukian (strain 97-27) protein is UV DNA damage endonuclease.